The following is a 1410-amino-acid chain: non-specific serine/threonine protein kinase (1410 aa).

A Protein kinase domain is found at 27 to 299 (THYVSQLNNS…LLEKYRTIYF (273 aa)). Residues 33 to 41 (LNNSRFLKT) and Lys-54 each bind ATP. Asp-147 (proton acceptor) is an active-site residue. 5 HEAT repeats span residues 441 to 478 (TKLD…EVKH), 485 to 525 (NIFV…KANL), 556 to 594 (RKLQ…YFGR), 596 to 633 (KTND…LLGP), and 635 to 672 (TMEQ…TRFV). WD repeat units lie at residues 1037 to 1076 (FDGT…NEKS), 1187 to 1226 (ADYG…QIRA), and 1230 to 1273 (GESL…CKHV).

The protein belongs to the protein kinase superfamily. Ser/Thr protein kinase family. As to quaternary structure, component of the autophagy-specific VPS34 PI3-kinase complex I composed of VPS15, VPS30, VPS34, ATG14 and ATG38; and of the VPS34 PI3-kinase complex II composed of VPS15, VPS30, VPS34 and VPS38. Autophosphorylated.

It localises to the golgi apparatus. It is found in the trans-Golgi network membrane. The protein resides in the endosome membrane. The enzyme catalyses L-seryl-[protein] + ATP = O-phospho-L-seryl-[protein] + ADP + H(+). It catalyses the reaction L-threonyl-[protein] + ATP = O-phospho-L-threonyl-[protein] + ADP + H(+). Its function is as follows. Serine/threonine-protein kinase that plays a role in signaling in modulation of host immune response, intracellular survival and virulence. Required for impediment of phagosomal maturation in THP-1 macrophages. Regulatory subunit of the autophagy-specific VPS34 PI3-kinase complex I essential to recruit the ATG8-phosphatidylinositol conjugate and the ATG12-ATG5 conjugate to the pre-autophagosomal structure. Within the PS34 PI3-kinase complex I, VPS15-mediated phosphorylation of VPS34 may be required for recruiting VPS34 to the membrane but not for activation of its PI3K activity. Is also involved in endosome-to-Golgi retrograde transport as part of the VPS34 PI3-kinase complex II. This second complex is required for the endosome-to-Golgi retrieval of PEP1 and KEX2, and the recruitment of VPS5 and VPS7, two components of the retromer complex, to endosomal membranes (probably through the synthesis of a specific pool of phosphatidylinositol 3-phosphate recruiting the retromer to the endosomes). By regulating VPS34 kinase activity, VPS15 appears to be essential for the efficient delivery of soluble hydrolases to the yeast vacuole. This Candida glabrata (strain ATCC 2001 / BCRC 20586 / JCM 3761 / NBRC 0622 / NRRL Y-65 / CBS 138) (Yeast) protein is non-specific serine/threonine protein kinase.